A 209-amino-acid chain; its full sequence is MIGLSEIELAGIAGAYFLGSLSSAIIVCRLMGLGDPRQEGSGNPGATNVKRLYGSKPAAITLLGDMLKGVVPVALANMAGWSPLAIILVGFASFIGHLYPIFFGFRGGKGVATMLGVMFGLSLPIGAAVAGTWLFVAKVLKISSLSALIATALAPLYIYLLADGNMAWVSVTAIMTLILFWRHRSNIERLLKGEEDLIKKQPGASDPKE.

Helical transmembrane passes span 7-27 (IELAGIAGAYFLGSLSSAIIV), 85-105 (AIILVGFASFIGHLYPIFFGF), 117-137 (VMFGLSLPIGAAVAGTWLFVA), 142-162 (ISSLSALIATALAPLYIYLLA), and 166-183 (MAWVSVTAIMTLILFWRH).

It belongs to the PlsY family. As to quaternary structure, probably interacts with PlsX.

The protein resides in the cell inner membrane. The catalysed reaction is an acyl phosphate + sn-glycerol 3-phosphate = a 1-acyl-sn-glycero-3-phosphate + phosphate. It functions in the pathway lipid metabolism; phospholipid metabolism. Catalyzes the transfer of an acyl group from acyl-phosphate (acyl-PO(4)) to glycerol-3-phosphate (G3P) to form lysophosphatidic acid (LPA). This enzyme utilizes acyl-phosphate as fatty acyl donor, but not acyl-CoA or acyl-ACP. This Hydrogenovibrio crunogenus (strain DSM 25203 / XCL-2) (Thiomicrospira crunogena) protein is Glycerol-3-phosphate acyltransferase.